Here is a 196-residue protein sequence, read N- to C-terminus: dTDP-4-dehydro-6-deoxyglucose 3-epimerase (196 aa).

Substrate contacts are provided by residues Arg21, Glu26, 45 to 47 (QVN), and Arg57. His60 functions as the Proton acceptor in the catalytic mechanism. Positions 70 and 117 each coordinate substrate. Tyr130 acts as the Proton donor in catalysis. Substrate-binding residues include Glu141 and Arg166.

Belongs to the dTDP-4-dehydrorhamnose 3,5-epimerase family. As to quaternary structure, homodimer.

The enzyme catalyses dTDP-4-dehydro-6-deoxy-alpha-D-glucose = dTDP-4-dehydro-6-deoxy-alpha-D-allose. The protein operates within antibiotic biosynthesis. Its function is as follows. Involved in the biosynthesis of dTDP-6-deoxy-D-allose, an intermediate in the biosynthesis of mycinose, which is one of the two unusual sugars attached to the 16-membered macrolactone ring of the aglycone antibiotic dihydrochalcomycin (GERI-155). Catalyzes the conversion of dTDP-4-oxo-6-deoxyglucose to dTDP-4-oxo-6-deoxyallose, via a C-3 epimerization. This Streptomyces sp protein is dTDP-4-dehydro-6-deoxyglucose 3-epimerase.